A 444-amino-acid chain; its full sequence is 4-O-dimethylallyl-L-tyrosine synthase (444 aa).

It belongs to the tryptophan dimethylallyltransferase family. In terms of assembly, homodimer.

It carries out the reaction L-tyrosine + dimethylallyl diphosphate = 4-O-dimethylallyl-L-tyrosine + diphosphate. Its function is as follows. 4-O-dimethylallyl-L-tyrosine synthase; part of the gene cluster that mediates the biosynthesis of an unusual class of epipolythiodioxopiperazines (ETPs) lacking the reactive thiol group important for toxicity. Firstly, L-tyrosine is prenylated by tcpD, before undergoing condensation with L-glycine in a reaction catalyzed by the NRPS tcpP leading to the diketopiperazine (DKP) backbone. Afterwards the alpha-carbon of tyrosine is oxidized by the cytochrome P450 tcpC to form a hydroxyl group. However, in contrast other ETP biosynthesis pathways studied so far, tcpC is not able to bishydroxylate the DKP at both alpha-carbon positions, but hydroxylates the alpha-carbon of the tyrosine part and the nitrogen of the glycine part. The next steps involve an alpha,beta-elimination reaction catalyzed by tcpI, a methylation by the methyltransferase tcpN the action of the four enzyme cascade tcpG/K/J/I. Due to a dysfunctional cytochrome P450 monooxygenase tcpC, the pathway leads to the biosynthesis of probable non-toxic metabolites lacking the reactive thiol group. This Claviceps purpurea (strain 20.1) (Ergot fungus) protein is 4-O-dimethylallyl-L-tyrosine synthase.